The sequence spans 586 residues: CTP synthase 2 (586 aa).

The 255-residue stretch at 300–554 (SIALVGKYTK…LAATGNLNAH (255 aa)) folds into the Glutamine amidotransferase type-1 domain. Active-site for GATase activity residues include C399, H526, and E528. Phosphoserine is present on residues S568, S571, and S574.

The protein belongs to the CTP synthase family.

It catalyses the reaction UTP + L-glutamine + ATP + H2O = CTP + L-glutamate + ADP + phosphate + 2 H(+). Its pathway is pyrimidine metabolism; CTP biosynthesis via de novo pathway; CTP from UDP: step 2/2. Its function is as follows. Catalyzes the ATP-dependent amination of UTP to CTP with either L-glutamine or ammonia as the source of nitrogen. Constitutes the rate-limiting enzyme in the synthesis of cytosine nucleotides. This chain is CTP synthase 2 (Ctps2), found in Mus musculus (Mouse).